The chain runs to 452 residues: Probable splicing factor, arginine/serine-rich 7 (452 aa).

RRM domains are found at residues 10–91 and 163–240; these read KILH…YPNP and RTVY…HSRV. The segment at 258–452 is disordered; the sequence is EEAIRMGRNG…GNGDVVMASE (195 aa). Over residues 259–272 the composition is skewed to basic and acidic residues; sequence EAIRMGRNGDDRDR. Positions 273-290 are enriched in basic residues; sequence RRSRSPRRRRSPSPRRRR. Residues 291 to 305 are compositionally biased toward basic and acidic residues; it reads DSRDRDRDRDRDRRR. Composition is skewed to basic residues over residues 323 to 335, 345 to 360, and 370 to 382; these read KRSRSRDRKRRSR, KRSRSRDRRRRSKSRD, and SKDRKRDKKRSRS. Over residues 383–421 the composition is skewed to basic and acidic residues; it reads RSPEKRRDKEDRKTEKKENENESSLREKLLEKKAARKDS.

This sequence belongs to the splicing factor SR family. Extensively phosphorylated on serine residues in the RS domain.

Its subcellular location is the nucleus. The chain is Probable splicing factor, arginine/serine-rich 7 (rsp-7) from Caenorhabditis elegans.